We begin with the raw amino-acid sequence, 395 residues long: RNA ligase 1 (395 aa).

Positions 48, 65, and 83 each coordinate ATP. The active-site N6-AMP-lysine intermediate is Lys-113. Residues Glu-173, Lys-255, and Lys-257 each contribute to the ATP site. Residue Asp-285 coordinates Mg(2+).

Requires Mg(2+) as cofactor. It depends on Mn(2+) as a cofactor.

The catalysed reaction is ATP + (ribonucleotide)n-3'-hydroxyl + 5'-phospho-(ribonucleotide)m = (ribonucleotide)n+m + AMP + diphosphate.. Functionally, RNA ligase that ligates single-stranded nucleic acids in an ATP-dependent manner. Catalyzes both inter- and intra-molecular single-stranded DNA (ssDNA) ligation to &gt;50% completion in a matter of hours at an elevated temperature, although favoring intra-molecular ligation on RNA and single-stranded DNA substrates. Is able to catalyze the adenylation reaction of ssDNA 3'-terminal phosphate (ssDNA 3'p) to 3'-adenylated DNA (ssDNA 3'pp5'A). Does not have significant 3'-adenylation activity with a 3'-phosphorylated nicked dsDNA substrate. The chain is RNA ligase 1 from Thermus scotoductus.